A 306-amino-acid polypeptide reads, in one-letter code: MSTLGHQYDNSLVSNAFGFLRLPMNFQPYDSDADWVITGVPFDMATSGRAGGRHGPAAIRQVSTNLAWEHNRFPWNFDMRERLNVVDCGDLVYAFGDAREMSEKLQAHAEKLLAAGKRMLSFGGDHFVTLPLLRAHAKHFGKMALVHFDAHTDTYANGCEFDHGTMFYTAPKEGLIDPNHSVQIGIRTEFDKDNGFTVLDACQVNDRSVDDVIAQVKQIVGDMSVYLTFDIDCLDPAFAPGTGTPVIGGLTSDRAIKLVRGLKDLNIVGMDVVEVAPAYDQSEITALAAATLALEMLYIQAAKKGE.

Residues His126, Asp149, His151, Asp153, Asp230, and Asp232 each contribute to the Mn(2+) site.

Belongs to the arginase family. Agmatinase subfamily. The cofactor is Mn(2+).

The catalysed reaction is agmatine + H2O = urea + putrescine. The protein operates within amine and polyamine biosynthesis; putrescine biosynthesis via agmatine pathway; putrescine from agmatine: step 1/1. Catalyzes the formation of putrescine from agmatine. The sequence is that of Agmatinase from Escherichia coli O9:H4 (strain HS).